The chain runs to 112 residues: Thioredoxin (112 aa).

A Thioredoxin domain is found at 2–112 (SEDSATVAVT…ALLRELSDAL (111 aa)). A disulfide bond links C35 and C38.

The protein belongs to the thioredoxin family.

In terms of biological role, participates in various redox reactions through the reversible oxidation of its active center dithiol to a disulfide and catalyzes dithiol-disulfide exchange reactions. The chain is Thioredoxin (trxA) from Mycolicibacterium smegmatis (Mycobacterium smegmatis).